The primary structure comprises 563 residues: PTS system fructose-specific EIIB'BC component (563 aa).

2 PTS EIIB type-2 domains span residues 1-85 (MKTL…KGHA) and 104-201 (KRVV…KAVA). Catalysis depends on cysteine 112, which acts as the Phosphocysteine intermediate; for EIIB activity. At cysteine 112 the chain carries Phosphocysteine; by EIIA. One can recognise a PTS EIIC type-2 domain in the interval 226–561 (AYRHLLTGVS…KRPEVDAVAK (336 aa)). 9 helical membrane-spanning segments follow: residues 236 to 256 (YMLP…AFGI), 274 to 294 (GGSA…FSIA), 304 to 324 (IGGM…IAGF), 349 to 369 (ILII…YLIG), 382 to 402 (WLQT…GGMM), 430 to 450 (MAAI…ATMV), 463 to 483 (GKAA…PFAA), 489 to 509 (VLPC…AIGA), and 518 to 538 (LFVL…VAII).

It localises to the cell inner membrane. It catalyses the reaction D-fructose(out) + N(pros)-phospho-L-histidyl-[protein] = D-fructose 1-phosphate(in) + L-histidyl-[protein]. In terms of biological role, the phosphoenolpyruvate-dependent sugar phosphotransferase system (sugar PTS), a major carbohydrate active transport system, catalyzes the phosphorylation of incoming sugar substrates concomitantly with their translocation across the cell membrane. The enzyme II FruAB PTS system is involved in fructose transport. The sequence is that of PTS system fructose-specific EIIB'BC component from Escherichia coli (strain K12).